Reading from the N-terminus, the 747-residue chain is Ion-translocating oxidoreductase complex subunit C (747 aa).

4Fe-4S ferredoxin-type domains lie at Met-368–Tyr-397 and Lys-407–Tyr-436. [4Fe-4S] cluster is bound by residues Cys-377, Cys-380, Cys-383, Cys-387, Cys-416, Cys-419, Cys-422, and Cys-426. The disordered stretch occupies residues Val-538 to Asp-564.

This sequence belongs to the 4Fe4S bacterial-type ferredoxin family. RnfC subfamily. In terms of assembly, the complex is composed of six subunits: RnfA, RnfB, RnfC, RnfD, RnfE and RnfG. [4Fe-4S] cluster is required as a cofactor.

The protein resides in the cell inner membrane. Part of a membrane-bound complex that couples electron transfer with translocation of ions across the membrane. In Pectobacterium carotovorum subsp. carotovorum (strain PC1), this protein is Ion-translocating oxidoreductase complex subunit C.